Here is a 291-residue protein sequence, read N- to C-terminus: MVNLPKFTMRDLVESGVHFGHKASRWNPKMAPYIYGVYNDIHIINLQNTVVLLKNALKALYDVVLKRGRVLFIGTKVQASAIIADEAIRCGQYYVNNRWLGGMLTNWETISLSIKKLKEYEKLIENVDNQFTKKELLLFEKKRAKLDRSIGGICNMGGLPHVLFVIDTNKEHIAIKEANKLNIPVIAVLDTNSDPTGIDYPIPGNDDAVRSIDFFCKIVSDTILEAIRSDLAKSGINVDGIKDFSVEKRDDLLRTSNRDNKNNKNNNNTDNTDNAASIKEEDLIGGSNNEN.

Positions 254–291 are disordered; sequence RTSNRDNKNNKNNNNTDNTDNAASIKEEDLIGGSNNEN. The segment covering 263-277 has biased composition (low complexity); the sequence is NKNNNNTDNTDNAAS.

This sequence belongs to the universal ribosomal protein uS2 family.

The chain is Small ribosomal subunit protein uS2 from Ehrlichia canis (strain Jake).